A 432-amino-acid polypeptide reads, in one-letter code: Serine/threonine-protein kinase stk11 (432 aa).

The 261-residue stretch at 52-312 (YLMGDLLGEG…IQQIRQHNWF (261 aa)) folds into the Protein kinase domain. Residues 58 to 66 (LGEGSYGKV) and Lys81 each bind ATP. Asp179 serves as the catalytic Proton acceptor. Thr192 carries the phosphothreonine; by autocatalysis modification. Residues 398–432 (TESQLKTERRVSSSSQRKASTTGSKVRKLSACKQQ) form a disordered region. Positions 409–421 (SSSSQRKASTTGS) are enriched in polar residues. Basic residues predominate over residues 422-432 (KVRKLSACKQQ). A Phosphoserine; by PKA modification is found at Ser427.

This sequence belongs to the protein kinase superfamily. CAMK Ser/Thr protein kinase family. LKB1 subfamily. Catalytic component of a trimeric complex composed of STK11/LKB1, STRAD (STRADA or STRADB) and CAB39/MO25 (CAB39/MO25alpha or CAB39L/MO25beta). Requires Mg(2+) as cofactor. Mn(2+) is required as a cofactor. Phosphorylated by a cAMP-dependent protein kinase. Autophosphorylated in a reaction that prefers Mn(2+) to Mg(2+). As to expression, oocytes, eggs and early embryos.

Its subcellular location is the nucleus. It is found in the cytoplasm. It catalyses the reaction L-seryl-[protein] + ATP = O-phospho-L-seryl-[protein] + ADP + H(+). It carries out the reaction L-threonyl-[protein] + ATP = O-phospho-L-threonyl-[protein] + ADP + H(+). Its function is as follows. Tumor suppressor serine/threonine-protein kinase that controls the activity of AMP-activated protein kinase (AMPK) family members, thereby playing a role in various processes such as cell metabolism, cell polarity, apoptosis and DNA damage response. Acts by phosphorylating the T-loop of AMPK family proteins, leading to promote their activity. In Xenopus laevis (African clawed frog), this protein is Serine/threonine-protein kinase stk11.